The following is a 556-amino-acid chain: GDP-Man:Man(3)GlcNAc(2)-PP-Dol alpha-1,2-mannosyltransferase (556 aa).

Residues 1–7 (MANGLFT) lie on the Lumenal side of the membrane. Residues 8 to 28 (YVAISLFTIGPLLALFIPFVW) traverse the membrane as a helical segment. Over 29–184 (RLVGSSLGWY…RWVLASTWPY (156 aa)) the chain is Cytoplasmic. Basic and acidic residues predominate over residues 64–79 (SKSAKGRKAEKEDRDT). The segment at 64 to 86 (SKSAKGRKAEKEDRDTFNNTEAT) is disordered. The helical intramembrane region spans 185-205 (FTLAGQSFGSLIMAWDAFSLL). Residues 206–454 (VPDIFVDTMG…VGVNGMWNEH (249 aa)) lie on the Cytoplasmic side of the membrane. The helical intramembrane region spans 455 to 475 (FGIGVVEYQAAGLISVVHDSG). The Cytoplasmic portion of the chain corresponds to 476–556 (GPKLDIVVEV…KAVEKPKSRQ (81 aa)).

This sequence belongs to the glycosyltransferase group 1 family. Glycosyltransferase 4 subfamily.

It localises to the endoplasmic reticulum membrane. The enzyme catalyses an alpha-D-Man-(1-&gt;3)-[alpha-D-Man-(1-&gt;6)]-beta-D-Man-(1-&gt;4)-beta-D-GlcNAc-(1-&gt;4)-alpha-D-GlcNAc-diphospho-di-trans,poly-cis-dolichol + 2 GDP-alpha-D-mannose = an alpha-D-Man-(1-&gt;2)-alpha-D-Man-(1-&gt;2)-alpha-D-Man-(1-&gt;3)-[alpha-D-Man-(1-&gt;6)]-beta-D-Man-(1-&gt;4)-beta-D-GlcNAc-(1-&gt;4)-alpha-D-GlcNAc-diphospho-di-trans,poly-cis-dolichol + 2 GDP + 2 H(+). Its pathway is protein modification; protein glycosylation. In terms of biological role, GDP-Man:Man(3)GlcNAc(2)-PP-Dol alpha-1,2-mannosyltransferase that operates in the biosynthetic pathway of dolichol-linked oligosaccharides, the glycan precursors employed in protein asparagine (N)-glycosylation. The assembly of dolichol-linked oligosaccharides begins on the cytosolic side of the endoplasmic reticulum membrane and finishes in its lumen. The sequential addition of sugars to dolichol pyrophosphate produces dolichol-linked oligosaccharides containing fourteen sugars, including two GlcNAcs, nine mannoses and three glucoses. Once assembled, the oligosaccharide is transferred from the lipid to nascent proteins by oligosaccharyltransferases. Catalyzes, on the cytoplasmic face of the endoplasmic reticulum, the addition of the fourth and fifth mannose residues to the dolichol-linked oligosaccharide chain, to produce Man(5)GlcNAc(2)-PP-dolichol core oligosaccharide. The sequence is that of GDP-Man:Man(3)GlcNAc(2)-PP-Dol alpha-1,2-mannosyltransferase (alg-11) from Neurospora crassa (strain ATCC 24698 / 74-OR23-1A / CBS 708.71 / DSM 1257 / FGSC 987).